The following is a 122-amino-acid chain: uncharacterized protein (122 aa).

Residues 93–113 (ILRICIVFLSLKIYTLTLVII) form a helical membrane-spanning segment.

Its subcellular location is the membrane. This is an uncharacterized protein from Saccharomyces cerevisiae (strain ATCC 204508 / S288c) (Baker's yeast).